The primary structure comprises 396 residues: Phosphoglycerate kinase (396 aa).

Residues 22–24, Arg37, 60–63, Arg118, and Arg151 each bind substrate; these read DFN and HFGR. Residues Lys201, Glu322, and 352–355 each bind ATP; that span reads GGDS.

Belongs to the phosphoglycerate kinase family. Monomer.

The protein resides in the cytoplasm. It catalyses the reaction (2R)-3-phosphoglycerate + ATP = (2R)-3-phospho-glyceroyl phosphate + ADP. The protein operates within carbohydrate degradation; glycolysis; pyruvate from D-glyceraldehyde 3-phosphate: step 2/5. This Wolbachia pipientis subsp. Culex pipiens (strain wPip) protein is Phosphoglycerate kinase.